The chain runs to 379 residues: UPF0754 membrane protein ABC1518 (379 aa).

2 consecutive transmembrane segments (helical) span residues Met-1–Thr-21 and Leu-358–Phe-378.

This sequence belongs to the UPF0754 family.

Its subcellular location is the cell membrane. The chain is UPF0754 membrane protein ABC1518 from Shouchella clausii (strain KSM-K16) (Alkalihalobacillus clausii).